The sequence spans 178 residues: Large ribosomal subunit protein uL6 (178 aa).

The protein belongs to the universal ribosomal protein uL6 family. In terms of assembly, part of the 50S ribosomal subunit.

Functionally, this protein binds to the 23S rRNA, and is important in its secondary structure. It is located near the subunit interface in the base of the L7/L12 stalk, and near the tRNA binding site of the peptidyltransferase center. This is Large ribosomal subunit protein uL6 from Streptococcus pneumoniae (strain JJA).